A 194-amino-acid chain; its full sequence is Cysteine and glycine-rich protein 3 (194 aa).

The interval 1–5 (MPNWG) is interaction with TCAP. An LIM zinc-binding 1 domain is found at 10–61 (CGACEKTVYHAEEIQCNGRSFHKTCFHCMACRKALDSTTVAAHESEIYCKVC). Positions 64-69 (RRYGPK) match the Nuclear localization signal motif. The segment at 94–106 (QSPKQARSATTSS) is interaction with CLF2. S95 and S153 each carry phosphoserine. An LIM zinc-binding 2 domain is found at 120-171 (CPRCGKSVYAAEKVMGGGKPWHKTCFRCAICGKSLESTNVTDKDGELYCKVC).

As to quaternary structure, self-associates. Oligomeric in the cytoplasm and monomeric in the nucleus. Homooligomers preferentially form along the actin cytoskeleton. Interacts with TCAP, LDHD, MYOD1, MYOG, ACTN2, NRAP, MYF6. Interacts (via N-terminus) with GLRX3 (via C-terminus) and PPP3CA; GLRX3 and calcineurin compete for interaction with CSRP3. Interacts with CFL2; the stoichiometry influences F-actin depolymerization and possibly two molecules of CFL2 can interact with one molecule of CSRP3 resulting in the highest functional impact; the interaction is stronger with phosphorylated CFL2.

The protein localises to the nucleus. The protein resides in the cytoplasm. It localises to the cytoskeleton. It is found in the myofibril. Its subcellular location is the sarcomere. The protein localises to the z line. Its function is as follows. Positive regulator of myogenesis. Acts as a cofactor for myogenic bHLH transcription factors such as MYOD1, and probably MYOG and MYF6. Enhances the DNA-binding activity of the MYOD1:TCF3 isoform E47 complex and may promote formation of a functional MYOD1:TCF3 isoform E47:MEF2A complex involved in myogenesis. Plays a crucial and specific role in the organization of cytosolic structures in cardiomyocytes. Could play a role in mechanical stretch sensing. May be a scaffold protein that promotes the assembly of interacting proteins at Z-line structures. It is essential for calcineurin anchorage to the Z line. Required for stress-induced calcineurin-NFAT activation. The role in regulation of cytoskeleton dynamics by association with CFL2 is reported conflictingly. Proposed to contribute to the maintenance of muscle cell integrity through an actin-based mechanism. Can directly bind to actin filaments, cross-link actin filaments into bundles without polarity selectivity and protect them from dilution- and cofilin-mediated depolymerization; the function seems to involve its self-association. In vitro can inhibit PKC/PRKCA activity. Proposed to be involved in cardiac stress signaling by down-regulating excessive PKC/PRKCA signaling. This chain is Cysteine and glycine-rich protein 3 (CSRP3), found in Bos taurus (Bovine).